We begin with the raw amino-acid sequence, 72 residues long: Putative transmembrane protein DDB_G0272126 (72 aa).

Transmembrane regions (helical) follow at residues 6 to 26 (KIIKSSYTLLSFFYFIANTII) and 38 to 58 (IILVSLYYLVFSLFITRIFYG).

Its subcellular location is the membrane. The chain is Putative transmembrane protein DDB_G0272126 from Dictyostelium discoideum (Social amoeba).